A 450-amino-acid polypeptide reads, in one-letter code: Ceramide glucosyltransferase (450 aa).

At 1-8 (MSDSGTLS) the chain is on the lumenal side. A helical membrane pass occupies residues 9 to 29 (LIGGIVFLVLWVVVWSICLLG). The Cytoplasmic portion of the chain corresponds to 30–337 (WRTARIRYAH…IRVRKKMTLA (308 aa)). Position 96 (Asp-96) is a short sequence motif, D1. Position 148 (Asp-148) is a short sequence motif, D2. Asp-286 is a short sequence motif (D3). The active-site Proton acceptor is Asp-286. The (Q/R)XXRW motif lies at 323 to 327 (RRVRW). The helical transmembrane segment at 338 to 358 (ATLLEPLTESIISGLYGAWAI) threads the bilayer. Residues 359 to 361 (SRL) lie on the Lumenal side of the membrane. The helical transmembrane segment at 362–382 (LGGNILPLFLLHMAAWISVDI) threads the bilayer. The Cytoplasmic segment spans residues 383–401 (STKRALETNIKGIGPPESK). Residues 402 to 422 (VTFLMAWAARECLALPIWMLA) form a helical membrane-spanning segment. Residues 423-450 (MTSSEVVWRGQKYKIIASGEAIRLGDRN) are Lumenal-facing.

It belongs to the glycosyltransferase 2 family.

It is found in the golgi apparatus membrane. The enzyme catalyses an N-acylsphing-4-enine + UDP-alpha-D-glucose = a beta-D-glucosyl-(1&lt;-&gt;1')-N-acylsphing-4-enine + UDP + H(+). Its pathway is lipid metabolism; sphingolipid metabolism. Its function is as follows. Catalyzes the final step in the biosynthesis of the membrane lipid glucosylceramide (GluCer), the transfer of glucose to ceramide. Glucosylceramides play important roles in growth, differentiation and pathogenicity. Essential factor in determining the success of fungal infection by regulating survival of yeast cells during the initial colonization of the host lung. The sequence is that of Ceramide glucosyltransferase from Cryptococcus neoformans var. grubii serotype A (strain H99 / ATCC 208821 / CBS 10515 / FGSC 9487) (Filobasidiella neoformans var. grubii).